Reading from the N-terminus, the 256-residue chain is Hydroxyacylglutathione hydrolase (256 aa).

Zn(2+)-binding residues include His-53, His-55, Asp-57, His-58, His-111, Asp-128, and His-166.

The protein belongs to the metallo-beta-lactamase superfamily. Glyoxalase II family. As to quaternary structure, monomer. The cofactor is Zn(2+).

The catalysed reaction is an S-(2-hydroxyacyl)glutathione + H2O = a 2-hydroxy carboxylate + glutathione + H(+). The protein operates within secondary metabolite metabolism; methylglyoxal degradation; (R)-lactate from methylglyoxal: step 2/2. In terms of biological role, thiolesterase that catalyzes the hydrolysis of S-D-lactoyl-glutathione to form glutathione and D-lactic acid. This chain is Hydroxyacylglutathione hydrolase, found in Thiobacillus denitrificans (strain ATCC 25259 / T1).